The sequence spans 534 residues: Serine/threonine-protein kinase 35 (534 aa).

Residues 32 to 176 form a disordered region; that stretch reads VESHGSLGAQ…AAAARAMDPV (145 aa). Low complexity-rich tracts occupy residues 39–65 and 166–176; these read GAQA…TSRA and PAAAARAMDPV. The Protein kinase domain maps to 202 to 530; that stretch reads YSLLAEIGRG…FELETRMDQV (329 aa). ATP contacts are provided by residues 208–216 and Lys-231; that span reads IGRGSYGVV. Asp-360 functions as the Proton acceptor in the catalytic mechanism.

The protein belongs to the protein kinase superfamily. Ser/Thr protein kinase family. In terms of assembly, interacts with PDLIM1/CLP-36. In terms of processing, autophosphorylated. Expressed in testis.

It is found in the nucleus. The protein localises to the nucleolus. Its subcellular location is the cytoplasm. The catalysed reaction is L-seryl-[protein] + ATP = O-phospho-L-seryl-[protein] + ADP + H(+). The enzyme catalyses L-threonyl-[protein] + ATP = O-phospho-L-threonyl-[protein] + ADP + H(+). This is Serine/threonine-protein kinase 35 (STK35) from Homo sapiens (Human).